The chain runs to 511 residues: ATP synthase subunit alpha 1 (511 aa).

174 to 181 contacts ATP; the sequence is GDRQTGKT.

The protein belongs to the ATPase alpha/beta chains family. F-type ATPases have 2 components, CF(1) - the catalytic core - and CF(0) - the membrane proton channel. CF(1) has five subunits: alpha(3), beta(3), gamma(1), delta(1), epsilon(1). CF(0) has four main subunits: a(1), b(1), b'(1) and c(9-12).

It is found in the cell inner membrane. The enzyme catalyses ATP + H2O + 4 H(+)(in) = ADP + phosphate + 5 H(+)(out). Its function is as follows. Produces ATP from ADP in the presence of a proton gradient across the membrane. The alpha chain is a regulatory subunit. This is ATP synthase subunit alpha 1 from Chlorobium luteolum (strain DSM 273 / BCRC 81028 / 2530) (Pelodictyon luteolum).